Consider the following 4456-residue polypeptide: Dynein axonemal heavy chain 2 (4456 aa).

Positions 1–12 (MASKAEKKRKVA) are enriched in basic residues. The disordered stretch occupies residues 1–55 (MASKAEKKRKVAGRGGARAGRVVRAPQSTAGPGATEASLLPDGQEPEPESGKEDS). Residues 1 to 1795 (MASKAEKKRK…RQTNTQFQYG (1795 aa)) are stem. Positions 1218 to 1274 (LDQIAQMRAMLMAMRDEENNLRSNLGIFKIEQPVSKDLQILEKELDALQQVWEITRD) form a coiled coil. A TPR 1 repeat occupies 1439-1474 (EDNQVALSTMKASRFVKAFEKDVDHWERCLSLILEV). 4 AAA regions span residues 1794 to 2015 (YGYE…LLRY), 2075 to 2302 (DTIE…DNCN), 2407 to 2654 (RYPP…VFQG), and 2751 to 3003 (EYNL…LRRY). Residues 1832-1839 (GPAGTGKT), 2113-2120 (GGTGSSKT), and 2445-2452 (GPVGTGKT) contribute to the ATP site. The TPR 2 repeat unit spans residues 2750 to 2783 (NEYNLSPSVVPMQLVLFREAIEHITRIVRVIGQP). 2791-2798 (GIGGSGRQ) provides a ligand contact to ATP. Positions 3018-3301 (YKKLLGEKRQ…EELRKKSEEM (284 aa)) are stalk. Residues 3041–3078 (FKIDETREKVEVMSLELEDAKKKVAEFQKQCEEYLVII) adopt a coiled-coil conformation. A TPR 3 repeat occupies 3101 to 3134 (IEEVKCQALADNAQKDLEEALPALEEAMRALESL). Coiled coils occupy residues 3245-3333 (KRIR…EEDL) and 3552-3596 (VRKE…GSLL). 2 AAA regions span residues 3387-3617 (LTNP…EVTE) and 3833-4052 (VTSF…LLSL). TPR repeat units follow at residues 4101–4134 (TTPF…LPSM) and 4135–4169 (DPPE…QPQI).

This sequence belongs to the dynein heavy chain family. Part of the axonemal inner dynein arm complex that consists of at least two heavy chains and a number of intermediate and light chains. Interacts with DNAI4.

It localises to the cytoplasm. The protein resides in the cytoskeleton. Its subcellular location is the cilium axoneme. It is found in the flagellum axoneme. Its function is as follows. As part of the axonemal inner dynein arm complex plays a central role in ciliary beat. Expressed in sperm flagellum, it is required for sperm motility. Dyneins are microtubule-based molecular motors possessing ATPase activities that can convert the chemical energy of ATP into relative sliding between adjacent microtubule doublets to generate ciliary bending. This Mus musculus (Mouse) protein is Dynein axonemal heavy chain 2.